A 551-amino-acid chain; its full sequence is Adenine deaminase (551 aa).

This sequence belongs to the metallo-dependent hydrolases superfamily. Adenine deaminase family. It depends on Mn(2+) as a cofactor.

The enzyme catalyses adenine + H2O + H(+) = hypoxanthine + NH4(+). The sequence is that of Adenine deaminase from Methanosarcina barkeri (strain Fusaro / DSM 804).